Consider the following 207-residue polypeptide: Urease accessory protein UreG (207 aa).

GTP is bound at residue 16-23 (GPVGSGKT).

This sequence belongs to the SIMIBI class G3E GTPase family. UreG subfamily. As to quaternary structure, homodimer. UreD, UreF and UreG form a complex that acts as a GTP-hydrolysis-dependent molecular chaperone, activating the urease apoprotein by helping to assemble the nickel containing metallocenter of UreC. The UreE protein probably delivers the nickel.

Its subcellular location is the cytoplasm. Facilitates the functional incorporation of the urease nickel metallocenter. This process requires GTP hydrolysis, probably effectuated by UreG. In Shewanella halifaxensis (strain HAW-EB4), this protein is Urease accessory protein UreG.